We begin with the raw amino-acid sequence, 507 residues long: Secreted lipase ARB_01498 (507 aa).

The signal sequence occupies residues 1 to 21; the sequence is MFVQLLTYGLVAASTLQGVFA. Residue Ser-196 is the Acyl-ester intermediate of the active site. N-linked (GlcNAc...) asparagine glycans are attached at residues Asn-262, Asn-321, Asn-358, and Asn-416.

The protein belongs to the type-B carboxylesterase/lipase family.

It is found in the secreted. It catalyses the reaction a triacylglycerol + H2O = a diacylglycerol + a fatty acid + H(+). The sequence is that of Secreted lipase ARB_01498 from Arthroderma benhamiae (strain ATCC MYA-4681 / CBS 112371) (Trichophyton mentagrophytes).